The sequence spans 205 residues: Small ribosomal subunit protein uS3 (205 aa).

The KH type-2 domain maps to 12 to 80 (VRQFLAKELA…PAQINIAEVR (69 aa)).

This sequence belongs to the universal ribosomal protein uS3 family. Part of the 30S ribosomal subunit. Forms a tight complex with proteins S10 and S14.

In terms of biological role, binds the lower part of the 30S subunit head. Binds mRNA in the 70S ribosome, positioning it for translation. The sequence is that of Small ribosomal subunit protein uS3 from Buchnera aphidicola subsp. Acyrthosiphon kondoi (Acyrthosiphon kondoi symbiotic bacterium).